The following is a 39-amino-acid chain: Phospholipase A2 (39 aa).

The Ca(2+) site is built by Trp-10, Gly-12, and Gly-14. An intrachain disulfide couples Cys-11 to Cys-33. The active site involves His-36. Residue Asp-37 participates in Ca(2+) binding.

The cofactor is Ca(2+). As to expression, expressed uniformly in tentacles (at protein level).

The protein resides in the secreted. It is found in the nematocyst. It carries out the reaction a 1,2-diacyl-sn-glycero-3-phosphocholine + H2O = a 1-acyl-sn-glycero-3-phosphocholine + a fatty acid + H(+). With respect to regulation, inhibited by morin and p-BPB. Its function is as follows. PA2 catalyzes the calcium-dependent hydrolysis of the 2-acyl groups in 3-sn-phosphoglycerides. Induces insulin secretion in isolated rat islets under high glucose concentration conditions, but not under low glucose concentration conditions. Increases perfusion pressure, renal vascular resistance, urinary flow, glomerular filtration rate, and potassium, sodium, and chloride excretion levels in rat kidney. Does not increase perfusion pressure in the rat mesenteric vascular bed. The protein is Phospholipase A2 of Bunodosoma caissarum (Sea anemone).